A 442-amino-acid polypeptide reads, in one-letter code: Matrix remodeling-associated protein 8 (442 aa).

Residues 1–19 form the signal peptide; that stretch reads MELLSRVLLWKLLLLQSSA. The Extracellular portion of the chain corresponds to 20–340; the sequence is VLSSGPSGTA…PEDHTHFFQQ (321 aa). 2 Ig-like V-type domains span residues 25–156 and 159–291; these read PSGT…LEVT and PLLS…LQVT. 2 disulfides stabilise this stretch: Cys-53-Cys-136 and Cys-185-Cys-271. The N-linked (GlcNAc...) asparagine glycan is linked to Asn-118. The short motif at 128–130 is the RGD 1 element; the sequence is RGD. At Ser-227 the chain carries Phosphoserine. Positions 251–253 match the RGD 2 motif; that stretch reads RGD. The tract at residues 296-319 is disordered; the sequence is EPPARASPGNGSGHSSAPSPDPTL. N-linked (GlcNAc...) asparagine glycosylation occurs at Asn-305. A helical membrane pass occupies residues 341–361; that stretch reads LGYVLATLLLFILLLITVVLA. The Cytoplasmic segment spans residues 362 to 442; the sequence is TRYRHSGGCK…DKEFRKEYCK (81 aa).

As to quaternary structure, homodimer in cis. Does not appear to form trans-homodimers. Interacts with ITGB3; the interaction inhibits ITGAV:ITGB3 heterodimer formation. As to expression, widely expressed (at protein level). Highly expressed in brain where it localizes to the glia limitans, which is formed by the endfeet of astrocytes surrounding capillaries, and beneath the pia mater (at protein level). In lung, detected in epithelial cells of the bronchus (at protein level). Expressed in intercalated disks in the heart (at protein level). Detected in pancreatic alpha-cells in the islet of Langerhans (at protein level). In kidney, found in the brush border of the proximal convoluted tubule (at protein level). Expressed in the epithelium of the small intestine (at protein level). Weakly expressed in liver (at protein level). Detected in myeloid cells.

It is found in the cell membrane. It localises to the cell junction. The protein resides in the tight junction. The protein localises to the cytoplasm. Its subcellular location is the cell projection. It is found in the cilium membrane. It localises to the nucleus. In terms of biological role, transmembrane protein which can modulate activity of various signaling pathways, probably via binding to integrin ITGAV:ITGB3. Mediates heterophilic cell-cell interactions in vitro. Inhibits osteoclastogenesis downstream of TNFSF11/RANKL and CSF1, where it may function by attenuating signaling via integrin ITGB3 and MAP kinase p38. Plays a role in cartilage formation where it promotes proliferation and maturation of growth plate chondrocytes. Stimulates formation of primary cilia in chondrocytes. Enhances expression of genes involved in the hedgehog signaling pathway in chondrocytes, including the hedgehog signaling molecule IHH; may also promote signaling via the PTHLH/PTHrP pathway. Plays a role in angiogenesis where it suppresses migration of endothelial cells and also promotes their apoptosis. Inhibits VEGF-induced activation of AKT and p38 MAP kinase in endothelial cells. Also inhibits VTN (vitronectin)-mediated integrin ITGAV:ITGB3 signaling and activation of PTK2/FAK. May play a role in the maturation and maintenance of the blood-brain barrier. The sequence is that of Matrix remodeling-associated protein 8 from Mus musculus (Mouse).